Here is a 269-residue protein sequence, read N- to C-terminus: Phosphate import ATP-binding protein PstB (269 aa).

The 243-residue stretch at 22-264 (AEVRDLNFYY…PVQQKTADYV (243 aa)) folds into the ABC transporter domain. 54–61 (GPSGCGKT) is a binding site for ATP.

This sequence belongs to the ABC transporter superfamily. Phosphate importer (TC 3.A.1.7) family. In terms of assembly, the complex is composed of two ATP-binding proteins (PstB), two transmembrane proteins (PstC and PstA) and a solute-binding protein (PstS).

Its subcellular location is the cell inner membrane. It carries out the reaction phosphate(out) + ATP + H2O = ADP + 2 phosphate(in) + H(+). Its function is as follows. Part of the ABC transporter complex PstSACB involved in phosphate import. Responsible for energy coupling to the transport system. In Thermosynechococcus vestitus (strain NIES-2133 / IAM M-273 / BP-1), this protein is Phosphate import ATP-binding protein PstB.